We begin with the raw amino-acid sequence, 527 residues long: Cytochrome P450 monooxygenase aba2 (527 aa).

A helical membrane pass occupies residues 26-46 (TTVAVLVTVALIAQVLWKIFF). N-linked (GlcNAc...) asparagine glycosylation is found at N189, N420, and N448. C460 provides a ligand contact to heme. N464 carries N-linked (GlcNAc...) asparagine glycosylation.

This sequence belongs to the cytochrome P450 family. It depends on heme as a cofactor.

The protein resides in the membrane. Its pathway is hormone biosynthesis. Its function is as follows. Cytochrome P450 monooxygenase; part of the gene cluster that mediates the biosynthesis of abscisic acid (ABA), a phytohormone that acts antagonistically toward salicylic acid (SA), jasmonic acid (JA) and ethylene (ETH) signaling, to impede plant defense responses. The first step of the pathway catalyzes the reaction from farnesyl diphosphate to alpha-ionylideneethane performed by the alpha-ionylideneethane synthase aba3 via a three-step reaction mechanism involving 2 neutral intermediates, beta-farnesene and allofarnesene. The cytochrome P450 monooxygenase aba1 might then be involved in the conversion of alpha-ionylideneethane to alpha-ionylideneacetic acid. Alpha-ionylideneacetic acid is further converted to abscisic acid in 2 steps involving the cytochrome P450 monooxygenase aba2 and the short-chain dehydrogenase/reductase aba4, via the intermediates 1'-deoxy-ABA or 1',4'-trans-diol-ABA, depending on the order of action of these 2 enzymes. Aba2 is responsible for the hydroxylation of carbon atom C-1' and aba4 might be involved in the oxidation of the C-4' carbon atom. This Botryotinia fuckeliana (strain B05.10) (Noble rot fungus) protein is Cytochrome P450 monooxygenase aba2 (aba2).